The chain runs to 239 residues: tRNA (guanine-N(1)-)-methyltransferase (239 aa).

S-adenosyl-L-methionine contacts are provided by residues G115 and 134–139; that span reads MGDFVL. The segment at 210-239 is disordered; that stretch reads QQQREQRTQERRPDLWNRWQQIQNPTPPAP. Basic and acidic residues predominate over residues 211–224; sequence QQREQRTQERRPDL.

The protein belongs to the RNA methyltransferase TrmD family. As to quaternary structure, homodimer.

It localises to the cytoplasm. It catalyses the reaction guanosine(37) in tRNA + S-adenosyl-L-methionine = N(1)-methylguanosine(37) in tRNA + S-adenosyl-L-homocysteine + H(+). In terms of biological role, specifically methylates guanosine-37 in various tRNAs. The chain is tRNA (guanine-N(1)-)-methyltransferase from Synechococcus sp. (strain CC9311).